A 236-amino-acid chain; its full sequence is Small ribosomal subunit protein uS3 (236 aa).

The KH type-2 domain occupies 39 to 107; that stretch reads IREFLTEELK…DTSLNIVEVR (69 aa). Residues 214 to 236 are disordered; it reads ASERRAVEGDNQGSSSNRRRENA.

Belongs to the universal ribosomal protein uS3 family. Part of the 30S ribosomal subunit. Forms a tight complex with proteins S10 and S14.

Functionally, binds the lower part of the 30S subunit head. Binds mRNA in the 70S ribosome, positioning it for translation. The sequence is that of Small ribosomal subunit protein uS3 from Brucella melitensis biotype 1 (strain ATCC 23456 / CCUG 17765 / NCTC 10094 / 16M).